The chain runs to 601 residues: Protein nubbin (601 aa).

The span at 1 to 25 shows a compositional bias: basic and acidic residues; the sequence is MVMSELRWHTASPEDNKNSLKRDLL. Disordered stretches follow at residues 1–32, 49–94, 121–158, 351–425, and 581–601; these read MVMS…PTSA, SRSP…AKRQ, KQEE…ATAS, PASS…ETTD, and INPS…YMMH. Over residues 49–68 the composition is skewed to low complexity; the sequence is SRSPSPLQSNASDCDDNNSS. The segment covering 135-157 has biased composition (polar residues); the sequence is NLTSDNSRHSTQSPSNSVKSATA. Positions 384–415 are enriched in low complexity; the sequence is TPSTPTSGTQMSQGTTTPQPKTVASAAAARAA. The 75-residue stretch at 421–495 folds into the POU-specific domain; sequence EETTDLEELE…LLQKWLDDAD (75 aa). The segment at residues 523–582 is a DNA-binding region (homeobox); it reads RRKKRTSIETTIRGALEKAFLANQKPTSEEITQLADRLSMEKEVVRVWFCNRRQKEKRIN. The segment covering 591–601 has biased composition (acidic residues); the sequence is ADDDESSYMMH.

Belongs to the POU transcription factor family. Class-2 subfamily. Initial expression in cellular blastoderm stage, then in ectodermal stripes during germband extension. Broad expression in the neuroectoderm followed by limitation to discrete subsets of CNS cells, and expression in specific PNS neurons and support cells.

Its subcellular location is the nucleus. In terms of biological role, DNA-binding regulatory protein implicated in early development. Involved in neuronal cell fate decision. Repressed directly or indirectly by the BX-C homeotic proteins. This Drosophila melanogaster (Fruit fly) protein is Protein nubbin (nub).